Here is a 233-residue protein sequence, read N- to C-terminus: Charged multivesicular body protein 4c (233 aa).

2 disordered regions span residues M1–E24 and Q173–T233. Residues M1 to V153 are intramolecular interaction with C-terminus. Residues L125–I183 adopt a coiled-coil conformation. The segment at G154–T233 is intramolecular interaction with N-terminus. A compositionally biased stretch (low complexity) spans S204–Q216. Residue S210 is modified to Phosphoserine; by AURKB.

The protein belongs to the SNF7 family. Probable core component of the endosomal sorting required for transport complex III (ESCRT-III). ESCRT-III components are thought to multimerize to form a flat lattice on the perimeter membrane of the endosome. Several assembly forms of ESCRT-III may exist that interact and act sequentially. Self-associates. Interacts with CHMP2A. Interacts with CHMP4A. Interacts with CHMP4B. Interacts with CHMP6. Interacts with VPS4A. Interacts with PDCD6IP; the interaction is direct. Phosphorylated at Ser-210 by AURKB during cytokinesis: together with ZFYVE19/ANCHR, phosphorylated CHMP4C retains abscission-competent VPS4 (VPS4A and/or VPS4B) at the midbody ring until abscission checkpoint signaling is terminated at late cytokinesis. In terms of tissue distribution, expressed in heart, spleen and kidney.

The protein resides in the cytoplasm. Its subcellular location is the cytosol. It localises to the late endosome membrane. It is found in the midbody. The protein localises to the midbody ring. In terms of biological role, probable core component of the endosomal sorting required for transport complex III (ESCRT-III) which is involved in multivesicular bodies (MVBs) formation and sorting of endosomal cargo proteins into MVBs. MVBs contain intraluminal vesicles (ILVs) that are generated by invagination and scission from the limiting membrane of the endosome and mostly are delivered to lysosomes enabling degradation of membrane proteins, such as stimulated growth factor receptors, lysosomal enzymes and lipids. The MVB pathway appears to require the sequential function of ESCRT-O, -I,-II and -III complexes. ESCRT-III proteins mostly dissociate from the invaginating membrane before the ILV is released. The ESCRT machinery also functions in topologically equivalent membrane fission events, such as the terminal stages of cytokinesis and the budding of enveloped viruses (HIV-1 and other lentiviruses). Key component of the cytokinesis checkpoint, a process required to delay abscission to prevent both premature resolution of intercellular chromosome bridges and accumulation of DNA damage: upon phosphorylation by AURKB, together with ZFYVE19/ANCHR, retains abscission-competent VPS4 (VPS4A and/or VPS4B) at the midbody ring until abscission checkpoint signaling is terminated at late cytokinesis. Deactivation of AURKB results in dephosphorylation of CHMP4C followed by its dissociation from ANCHR and VPS4 and subsequent abscission. ESCRT-III proteins are believed to mediate the necessary vesicle extrusion and/or membrane fission activities, possibly in conjunction with the AAA ATPase VPS4. Involved in HIV-1 p6- and p9-dependent virus release. CHMP4A/B/C are required for the exosomal release of SDCBP, CD63 and syndecan. The polypeptide is Charged multivesicular body protein 4c (CHMP4C) (Homo sapiens (Human)).